We begin with the raw amino-acid sequence, 53 residues long: ATP synthase protein 8 (53 aa).

A helical membrane pass occupies residues 4–24; it reads MAPISWLLLFIVFSITFILFC.

This sequence belongs to the ATPase protein 8 family. In terms of assembly, F-type ATPases have 2 components, CF(1) - the catalytic core - and CF(0) - the membrane proton channel.

The protein resides in the mitochondrion membrane. Its function is as follows. Mitochondrial membrane ATP synthase (F(1)F(0) ATP synthase or Complex V) produces ATP from ADP in the presence of a proton gradient across the membrane which is generated by electron transport complexes of the respiratory chain. F-type ATPases consist of two structural domains, F(1) - containing the extramembraneous catalytic core and F(0) - containing the membrane proton channel, linked together by a central stalk and a peripheral stalk. During catalysis, ATP synthesis in the catalytic domain of F(1) is coupled via a rotary mechanism of the central stalk subunits to proton translocation. Part of the complex F(0) domain. Minor subunit located with subunit a in the membrane. This Drosophila yakuba (Fruit fly) protein is ATP synthase protein 8 (mt:ATPase8).